The sequence spans 280 residues: MTQTFGENLLDAASTRGRLCVGIDPHESLLRAWGLPVDATGLAEFSRICVEAFADTVALVKPQVAFYERFGSRGFAVLEETIGTLRERGCLVVSDAKRGDIGSTMAGYATAWLDPGSPLSSDAVTVSPYLGFGSLQPVFDLAEEHGRGVFVLAATSNPEARVLQDQTDASGVSISQQIVNEAAALNAPHLAQHRAGNIGVVVGATLTDPPALSGLNGAILMPGVGTQGGTAQDVGTIAGDMAHLAFPNVSRAVLAQGPDVGNLRVAVSETAAEFPGFPRS.

K97 functions as the Proton donor in the catalytic mechanism.

It belongs to the OMP decarboxylase family. Type 2 subfamily.

The enzyme catalyses orotidine 5'-phosphate + H(+) = UMP + CO2. The protein operates within pyrimidine metabolism; UMP biosynthesis via de novo pathway; UMP from orotate: step 2/2. This Corynebacterium efficiens (strain DSM 44549 / YS-314 / AJ 12310 / JCM 11189 / NBRC 100395) protein is Orotidine 5'-phosphate decarboxylase (pyrF).